The sequence spans 175 residues: Isopentenyl-diphosphate Delta-isomerase (175 aa).

Mn(2+)-binding residues include His-22 and His-29. Positions 27–160 (KLHRAFSVLL…PAAYTPWLAE (134 aa)) constitute a Nudix hydrolase domain. Residue Cys-64 is part of the active site. Mg(2+) is bound at residue Cys-64. His-66 is a Mn(2+) binding site. Glu-84 is a Mg(2+) binding site. Residues Glu-110 and Glu-112 each contribute to the Mn(2+) site. The active site involves Glu-112.

It belongs to the IPP isomerase type 1 family. The cofactor is Mg(2+). Mn(2+) serves as cofactor.

The protein resides in the cytoplasm. It catalyses the reaction isopentenyl diphosphate = dimethylallyl diphosphate. The protein operates within isoprenoid biosynthesis; dimethylallyl diphosphate biosynthesis; dimethylallyl diphosphate from isopentenyl diphosphate: step 1/1. Catalyzes the 1,3-allylic rearrangement of the homoallylic substrate isopentenyl (IPP) to its highly electrophilic allylic isomer, dimethylallyl diphosphate (DMAPP). The sequence is that of Isopentenyl-diphosphate Delta-isomerase from Nocardia farcinica (strain IFM 10152).